Here is a 92-residue protein sequence, read N- to C-terminus: DNA-directed RNA polymerase subunit omega (92 aa).

Belongs to the RNA polymerase subunit omega family. As to quaternary structure, the RNAP catalytic core consists of 2 alpha, 1 beta, 1 beta' and 1 omega subunit. When a sigma factor is associated with the core the holoenzyme is formed, which can initiate transcription.

The catalysed reaction is RNA(n) + a ribonucleoside 5'-triphosphate = RNA(n+1) + diphosphate. Promotes RNA polymerase assembly. Latches the N- and C-terminal regions of the beta' subunit thereby facilitating its interaction with the beta and alpha subunits. This is DNA-directed RNA polymerase subunit omega from Shewanella oneidensis (strain ATCC 700550 / JCM 31522 / CIP 106686 / LMG 19005 / NCIMB 14063 / MR-1).